We begin with the raw amino-acid sequence, 20 residues long: Brevinin-1ITa (20 aa).

M8 is modified (methionine sulfoxide; partial). Cysteines 14 and 20 form a disulfide.

Belongs to the frog skin active peptide (FSAP) family. Brevinin subfamily. Expressed by the skin glands.

It is found in the secreted. In terms of biological role, antimicrobial peptide active against Gram-positive bacterium S.epidermidis ATCC 12228 (MIC=4 uM), against Gram-negative bacterium E.coli ATCC 25922 (MIC=64 uM) and against yeast C.parapsilosis ATCC 22019 (MIC=16 uM). Has hemolytic and cytotoxic activity. The polypeptide is Brevinin-1ITa (Rana italica (Italian stream frog)).